A 90-amino-acid polypeptide reads, in one-letter code: Phosphocarrier protein HPr (90 aa).

Residues 1 to 89 (MPAREITIIN…ELINNFFDEG (89 aa)) form the HPr domain. Residue H15 is the Pros-phosphohistidine intermediate of the active site.

The protein belongs to the HPr family.

The protein resides in the cytoplasm. General (non sugar-specific) component of the phosphoenolpyruvate-dependent sugar phosphotransferase system (sugar PTS). This major carbohydrate active-transport system catalyzes the phosphorylation of incoming sugar substrates concomitantly with their translocation across the cell membrane. The phosphoryl group from phosphoenolpyruvate (PEP) is transferred to the phosphoryl carrier protein HPr by enzyme I. Phospho-HPr then transfers it to the PTS EIIA domain. This is Phosphocarrier protein HPr (ptsH) from Pseudomonas putida (Arthrobacter siderocapsulatus).